Reading from the N-terminus, the 70-residue chain is Large ribosomal subunit protein eL38 (70 aa).

The protein belongs to the eukaryotic ribosomal protein eL38 family.

The polypeptide is Large ribosomal subunit protein eL38 (RPL38) (Artemia franciscana (Brine shrimp)).